The following is a 488-amino-acid chain: Facilitated trehalose transporter Tret1-2 homolog (488 aa).

Over 1-28 (MKILMRADTHVSYSVPAEGTKANFTFSQ) the chain is Cytoplasmic. Residues 29 to 49 (VLAALSVSLCSLVVGFVSAYT) traverse the membrane as a helical segment. Residues 50–72 (SPALVSMTDRTITSFEVTKDAGS) are Extracellular-facing. Residues 73 to 93 (WVGGIMPLAALAGGITGGPLI) form a helical membrane-spanning segment. Topologically, residues 94-105 (EYLGRRNTILAT) are cytoplasmic. The chain crosses the membrane as a helical span at residues 106–126 (AVPFIVSSLLIACAVNVIMIL). Topologically, residues 127 to 129 (CGR) are extracellular. Residues 130–150 (FLTGFCVGIASLSLPVYLGET) form a helical membrane-spanning segment. Over 151–160 (LQPEVRGTLG) the chain is Cytoplasmic. Residues 161-181 (LLPTALGNIGILVCYVAGSFM) traverse the membrane as a helical segment. Asparagine 182 is a glycosylation site (N-linked (GlcNAc...) asparagine). Over 182–184 (NWS) the chain is Extracellular. Residues 185–205 (ILAFLGAALPVPFLILMIIIP) traverse the membrane as a helical segment. Topologically, residues 206 to 268 (ETPRWFVNRG…ELFKRINLKP (63 aa)) are cytoplasmic. The chain crosses the membrane as a helical span at residues 269–289 (LSISLGLMFFQQFSGINAVIF). At 290 to 305 (YTVQIFKDAGSTIDSN) the chain is on the extracellular side. The helical transmembrane segment at 306–326 (LCTIIVGIVNFFATFMGIILI) threads the bilayer. The Cytoplasmic portion of the chain corresponds to 327–332 (DRLGRK). Residues 333–353 (ILLYVSDIAMILTLSILGGFF) traverse the membrane as a helical segment. Over 354–372 (YCKAHGPDVSHLGWLPLSC) the chain is Extracellular. A helical membrane pass occupies residues 373 to 393 (FVIYILGFSLGFGPIPWLMMG). The Cytoplasmic portion of the chain corresponds to 394 to 402 (EILPAKIRG). Residues 403-423 (PAASVVTAFNWFCTFVVTKTF) form a helical membrane-spanning segment. Topologically, residues 424-433 (QDLTVAMGPH) are extracellular. The helical transmembrane segment at 434–454 (GAFWLFGVVCIVGLFFVIIYV) threads the bilayer. Residues 455 to 488 (PETRGKSLEEIERKMMGRVPISAVVNIKPFSFNM) are Cytoplasmic-facing.

The protein belongs to the major facilitator superfamily. Sugar transporter (TC 2.A.1.1) family. Trehalose transporter subfamily.

The protein resides in the cell membrane. Functionally, fails to transport trehalose. This is Facilitated trehalose transporter Tret1-2 homolog from Drosophila sechellia (Fruit fly).